A 58-amino-acid chain; its full sequence is 6.8 kDa protein (58 aa).

The protein is 6.8 kDa protein of Satellite tobacco mosaic virus (STMV).